The primary structure comprises 92 residues: MGRSLKKNPFVANHLLRKINKLNTKGEKEIIITWSRASTIIPTMIGHTIAIHNGREHLPIYITDRMVGHKLGEFSPTLTFRGYAKNDTKSRR.

It belongs to the universal ribosomal protein uS19 family.

Its subcellular location is the plastid. The protein resides in the chloroplast. In terms of biological role, protein S19 forms a complex with S13 that binds strongly to the 16S ribosomal RNA. This is Small ribosomal subunit protein uS19c from Cicer arietinum (Chickpea).